The primary structure comprises 396 residues: Subtilisin-like protease 5 (396 aa).

The signal sequence occupies residues 1–20 (MTGFFTILSFSLAALSVTNA). Positions 21 to 116 (AQILSVPKGA…VEPDAIISQH (96 aa)) are excised as a propeptide. The 77-residue stretch at 37–113 (YIVVMKDDTS…VAFVEPDAII (77 aa)) folds into the Inhibitor I9 domain. N-linked (GlcNAc...) asparagine glycosylation occurs at Asn63. The Peptidase S8 domain occupies 125-396 (PWGLSRLSNR…TRLLYNGSGR (272 aa)). Catalysis depends on charge relay system residues Asp156 and His187. Asn230 and Asn248 each carry an N-linked (GlcNAc...) asparagine glycan. Ser342 functions as the Charge relay system in the catalytic mechanism. The span at 377–389 (TIRNPGPDTTTRL) shows a compositional bias: polar residues. The disordered stretch occupies residues 377-396 (TIRNPGPDTTTRLLYNGSGR). The N-linked (GlcNAc...) asparagine glycan is linked to Asn392.

This sequence belongs to the peptidase S8 family.

It is found in the secreted. Functionally, secreted subtilisin-like serine protease with keratinolytic activity that contributes to pathogenicity. In Arthroderma benhamiae (Trichophyton mentagrophytes), this protein is Subtilisin-like protease 5 (SUB5).